The chain runs to 973 residues: GATOR2 complex protein WDR59 (973 aa).

6 WD repeats span residues 57–98, 103–143, 146–185, 189–229, 232–276, and 280–324; these read QSKW…GEVC, GHTR…KPTV, SAVA…TAVE, AHLS…KYLN, PCQV…TPVH, and GHDD…QRLC. The tract at residues 346–365 is disordered; the sequence is DKALQPQDSEPQHSSGHGDE. Over residues 351–360 the composition is skewed to polar residues; the sequence is PQDSEPQHSS. The RWD domain occupies 393–494; sequence QEFSLINVQI…RQLVSWLESV (102 aa). The C4-type zinc finger occupies 900–920; that stretch reads YCSHCRSEARGTQCAICKGFT. The Zn(2+) site is built by Cys-901, Cys-904, Cys-913, Cys-916, Cys-926, Cys-937, His-942, His-945, His-948, Cys-959, Cys-963, Cys-965, and Cys-967. Residues 921 to 970 form an RING-type; atypical zinc finger; that stretch reads FQCAICHVAVRGSSNFCLTCGHGGHTSHMMEWFRTQEVCPTGCGCHCLLE.

The protein belongs to the WD repeat WDR59 family. As to quaternary structure, component of the GATOR2 subcomplex, composed of MIOS, SEC13, SEH1L, WDR24 and WDR59. The GATOR2 complex interacts with CASTOR1 and CASTOR2; the interaction is negatively regulated by arginine. The GATOR2 complex interacts with SESN1, SESN2 and SESN3; the interaction is negatively regulated by amino acids. Interacts with DDB1-CUL4A/B E3 ligase complexes.

It localises to the lysosome membrane. The GATOR2 complex is negatively regulated by the upstream amino acid sensors CASTOR1 and SESN2, which sequester the GATOR2 complex in absence of amino acids. In the presence of abundant amino acids, GATOR2 is released from CASTOR1 and SESN2 and activated. In terms of biological role, as a component of the GATOR2 complex, functions as an activator of the amino acid-sensing branch of the mTORC1 signaling pathway. The GATOR2 complex indirectly activates mTORC1 through the inhibition of the GATOR1 subcomplex. GATOR2 probably acts as an E3 ubiquitin-protein ligase toward GATOR1. In the presence of abundant amino acids, the GATOR2 complex mediates ubiquitination of the NPRL2 core component of the GATOR1 complex, leading to GATOR1 inactivation. In the absence of amino acids, GATOR2 is inhibited, activating the GATOR1 complex. This Gallus gallus (Chicken) protein is GATOR2 complex protein WDR59.